A 275-amino-acid polypeptide reads, in one-letter code: Adenosylcobinamide-GDP ribazoletransferase (275 aa).

The next 6 membrane-spanning stretches (helical) occupy residues 52-72, 73-93, 126-146, 181-201, 208-228, and 251-271; these read VVGV…GVLG, VTPL…NRMM, MGFS…AALV, FGAM…LVAL, VAVW…GIIA, and IGAG…VAVA.

This sequence belongs to the CobS family. Mg(2+) is required as a cofactor.

Its subcellular location is the cell membrane. The enzyme catalyses alpha-ribazole + adenosylcob(III)inamide-GDP = adenosylcob(III)alamin + GMP + H(+). It catalyses the reaction alpha-ribazole 5'-phosphate + adenosylcob(III)inamide-GDP = adenosylcob(III)alamin 5'-phosphate + GMP + H(+). The protein operates within cofactor biosynthesis; adenosylcobalamin biosynthesis; adenosylcobalamin from cob(II)yrinate a,c-diamide: step 7/7. In terms of biological role, joins adenosylcobinamide-GDP and alpha-ribazole to generate adenosylcobalamin (Ado-cobalamin). Also synthesizes adenosylcobalamin 5'-phosphate from adenosylcobinamide-GDP and alpha-ribazole 5'-phosphate. The protein is Adenosylcobinamide-GDP ribazoletransferase of Corynebacterium efficiens (strain DSM 44549 / YS-314 / AJ 12310 / JCM 11189 / NBRC 100395).